The sequence spans 499 residues: Potassium voltage-gated channel subfamily A member 2 (499 aa).

The interval 1 to 27 (MTVATGDLTDGSVGFAGHPQDSYDPEP) is disordered. The tract at residues 1–125 (MTVATGDLTD…YELGEEAMEI (125 aa)) is tetramerization domain. The Cytoplasmic portion of the chain corresponds to 1–160 (MTVATGDLTD…LLFEYPESSG (160 aa)). The chain crosses the membrane as a helical span at residues 161 to 182 (PARIIAIISVTVILISIVSFCL). The Extracellular portion of the chain corresponds to 183 to 221 (ETLPVFRDENEDMHGSGGNYYSYPNSTVRFQKSNTFTDP). Asn-207 carries an N-linked (GlcNAc...) asparagine glycan. The chain crosses the membrane as a helical span at residues 222–243 (FFIVETLCIIWFSFEFLVRFLA). The S-palmitoyl cysteine moiety is linked to residue Cys-244. Residues 244-254 (CPSKAVFFTNL) are Cytoplasmic-facing. A helical membrane pass occupies residues 255–275 (MNIIDIVAIIPYFITLGTELA). Topologically, residues 276–289 (EKTEDGQQGQQAMS) are extracellular. The helical; Voltage-sensor transmembrane segment at 290–310 (LAILRVIRLVRVFRIFKLSRH) threads the bilayer. Over 311–325 (SKGLQILGQTLNASM) the chain is Cytoplasmic. The S4-S5 linker stretch occupies residues 312 to 325 (KGLQILGQTLNASM). A helical transmembrane segment spans residues 326–347 (RELGLLIFFLFIGVILFSSAVF). At 348-361 (FAEADERDSQFPSI) the chain is on the extracellular side. Positions 362-373 (PDAFWWAVVSMT) form an intramembrane region, helical. The Selectivity filter signature appears at 374–379 (TVGYGD). The stretch at 374 to 381 (TVGYGDMV) is an intramembrane region. At 382–388 (PTTIGGK) the chain is on the extracellular side. Residues 389 to 417 (IVGSLCAIAGVLTIALPVPVIVSNFNYFY) form a helical membrane-spanning segment. Over 418 to 499 (HRETEGEEQA…VNITKMLTDV (82 aa)) the chain is Cytoplasmic. The PDZ-binding signature appears at 497-499 (TDV).

The protein belongs to the potassium channel family. A (Shaker) (TC 1.A.1.2) subfamily. Kv1.2/KCNA2 sub-subfamily. Homotetramer and heterotetramer with other family members. Detected in tadpole brain and spinal cord.

The protein resides in the cell membrane. The enzyme catalyses K(+)(in) = K(+)(out). In terms of biological role, voltage-gated potassium channel that mediates transmembrane potassium transport in excitable membranes, primarily in the brain and central nervous system. Prevents aberrant action potential firing and regulates neuronal output. Forms tetrameric potassium-selective channels through which potassium ions pass in accordance with their electrochemical gradient. The channel alternates between opened and closed conformations in response to the voltage difference across the membrane. Can form functional homotetrameric channels and heterotetrameric channels with other family members; the channels characteristics depend critically on the types of channel-forming alpha subunits that are present. Channel properties are modulated by cytoplasmic beta subunits that regulate the subcellular location of the alpha subunits. In vivo, membranes probably contain a mixture of heteromeric potassium channel complexes, making it difficult to assign currents observed in intact tissues to any particular potassium channel family member. Homotetrameric KCNA2 forms a delayed-rectifier potassium channel that opens in response to membrane depolarization, followed by slow spontaneous channel closure. Regulates neuronal excitability and plays a role as pacemaker in the regulation of neuronal action potentials. KCNA2-containing channels play a presynaptic role and prevent hyperexcitability and aberrant action potential firing. Response to toxins that are selective for KCNA2-containing potassium channels suggests that in Purkinje cells, dendritic subthreshold KCNA2-containing potassium channels prevent random spontaneous calcium spikes, suppressing dendritic hyperexcitability without hindering the generation of somatic action potentials, and thereby play an important role in motor coordination. Plays a role in the induction of long-term potentiation of neuron excitability in the CA3 layer of the hippocampus. This is Potassium voltage-gated channel subfamily A member 2 (kcna2) from Xenopus laevis (African clawed frog).